The primary structure comprises 277 residues: Putative protein-disulfide oxidoreductase RC0029 (277 aa).

The first 22 residues, 1 to 22 (MRSIFIILIFLLFLSSCSEEKA), serve as a signal peptide directing secretion. Residues 34-80 (EHETQNNETSKATNQEAVNSENTTESIVPANDNNQTDEVSTPASQKQ) form a disordered region. Over residues 39 to 80 (NNETSKATNQEAVNSENTTESIVPANDNNQTDEVSTPASQKQ) the composition is skewed to polar residues. The region spanning 76-265 (ASQKQKNPAI…ISTAVDKALE (190 aa)) is the Thioredoxin domain. An intrachain disulfide couples cysteine 118 to cysteine 121.

It belongs to the thioredoxin family. DsbA subfamily.

It is found in the periplasm. In terms of biological role, may be required for disulfide bond formation in some proteins. The polypeptide is Putative protein-disulfide oxidoreductase RC0029 (Rickettsia conorii (strain ATCC VR-613 / Malish 7)).